The primary structure comprises 274 residues: Lipoprotein E (274 aa).

The first 20 residues, 1–20 (MKTTLKMTALAALSAFVLAG), serve as a signal peptide directing secretion. C21 is lipidated: N-palmitoyl cysteine. A lipid anchor (S-diacylglycerol cysteine) is attached at C21.

Its subcellular location is the cell outer membrane. This is Lipoprotein E (hel) from Haemophilus influenzae (strain ATCC 51907 / DSM 11121 / KW20 / Rd).